A 232-amino-acid chain; its full sequence is tRNA-uridine aminocarboxypropyltransferase (232 aa).

C31, C34, C41, and C43 together coordinate Zn(2+). Positions 137 to 140 (DGTW) match the DXTW motif.

Belongs to the TDD superfamily. DTWD2 family. TapT subfamily. In terms of assembly, monomer in solution.

It catalyses the reaction a uridine in tRNA + S-adenosyl-L-methionine = a 3-[(3S)-3-amino-3-carboxypropyl]uridine in tRNA + S-methyl-5'-thioadenosine + H(+). The catalysed reaction is uridine(47) in tRNA(Phe) + S-adenosyl-L-methionine = 3-[(3S)-3-amino-3-carboxypropyl]uridine(47) in tRNA(Phe) + S-methyl-5'-thioadenosine + H(+). Its activity is regulated as follows. The degree of the acp3U modification at U47 is dependent on the presence of the m7G modification at the preceding nucleotide G46. It also depends on medium conditions. Catalyzes the formation of 3-(3-amino-3-carboxypropyl)uridine (acp3U) at position 47 of tRNAs. Acp3U47 confers thermal stability on tRNA. The chain is tRNA-uridine aminocarboxypropyltransferase from Escherichia coli (strain K12).